A 494-amino-acid chain; its full sequence is Probable malate:quinone oxidoreductase (494 aa).

This sequence belongs to the MQO family. It depends on FAD as a cofactor.

The enzyme catalyses (S)-malate + a quinone = a quinol + oxaloacetate. Its pathway is carbohydrate metabolism; tricarboxylic acid cycle; oxaloacetate from (S)-malate (quinone route): step 1/1. This is Probable malate:quinone oxidoreductase from Kocuria rhizophila (strain ATCC 9341 / DSM 348 / NBRC 103217 / DC2201).